We begin with the raw amino-acid sequence, 178 residues long: ATP-dependent protease subunit HslV (178 aa).

Threonine 7 is a catalytic residue. The Na(+) site is built by glycine 162, cysteine 165, and threonine 168.

The protein belongs to the peptidase T1B family. HslV subfamily. A double ring-shaped homohexamer of HslV is capped on each side by a ring-shaped HslU homohexamer. The assembly of the HslU/HslV complex is dependent on binding of ATP.

It is found in the cytoplasm. The catalysed reaction is ATP-dependent cleavage of peptide bonds with broad specificity.. With respect to regulation, allosterically activated by HslU binding. Functionally, protease subunit of a proteasome-like degradation complex believed to be a general protein degrading machinery. In Burkholderia mallei (strain ATCC 23344), this protein is ATP-dependent protease subunit HslV.